The following is a 480-amino-acid chain: Aromatic-L-amino-acid decarboxylase (480 aa).

The residue at position 1 (methionine 1) is an N-acetylmethionine. 2 repeat units span residues 58-115 (KDIE…TELE) and 118-178 (MMDW…TQAA). A 2 X approximate tandem repeats region spans residues 58-178 (KDIEKIIMPG…AASPEFTQAA (121 aa)). Residue threonine 82 participates in substrate binding. Pyridoxal 5'-phosphate contacts are provided by alanine 148 and serine 149. A substrate-binding site is contributed by histidine 192. Pyridoxal 5'-phosphate is bound by residues threonine 246 and asparagine 300. Lysine 303 bears the N6-(pyridoxal phosphate)lysine mark.

Belongs to the group II decarboxylase family. As to quaternary structure, homodimer. Requires pyridoxal 5'-phosphate as cofactor.

It carries out the reaction L-dopa + H(+) = dopamine + CO2. The catalysed reaction is 5-hydroxy-L-tryptophan + H(+) = serotonin + CO2. It participates in catecholamine biosynthesis; dopamine biosynthesis; dopamine from L-tyrosine: step 2/2. Its function is as follows. Catalyzes the decarboxylation of L-3,4-dihydroxyphenylalanine (DOPA) to dopamine and L-5-hydroxytryptophan to serotonin. This Mus musculus (Mouse) protein is Aromatic-L-amino-acid decarboxylase (Ddc).